The sequence spans 371 residues: Methylthioribose-1-phosphate isomerase (371 aa).

Substrate-binding positions include 53–55 (RGA), arginine 90, and glutamine 203. Aspartate 243 acts as the Proton donor in catalysis. 253 to 254 (NK) contributes to the substrate binding site.

It belongs to the eIF-2B alpha/beta/delta subunits family. MtnA subfamily.

The enzyme catalyses 5-(methylsulfanyl)-alpha-D-ribose 1-phosphate = 5-(methylsulfanyl)-D-ribulose 1-phosphate. The catalysed reaction is 5-deoxy-alpha-D-ribose 1-phosphate = 5-deoxy-D-ribulose 1-phosphate. The protein operates within amino-acid biosynthesis; L-methionine biosynthesis via salvage pathway; L-methionine from S-methyl-5-thio-alpha-D-ribose 1-phosphate: step 1/6. Catalyzes the interconversion of methylthioribose-1-phosphate (MTR-1-P) into methylthioribulose-1-phosphate (MTRu-1-P). Also catalyzes the interconversion of 5-deoxyribose 1-phosphate and 5-deoxyribulose 1-phosphate. Part of a bifunctional DHAP-shunt salvage pathway for SAM by-products. This Escherichia coli O45:K1 (strain S88 / ExPEC) protein is Methylthioribose-1-phosphate isomerase.